The chain runs to 75 residues: U6-lycotoxin-Ls1a (75 aa).

The signal sequence occupies residues 1–21 (MKLLLFTALVLVVISLIEVEA). The propeptide occupies 22–25 (ENER).

This sequence belongs to the neurotoxin 19 (CSTX) family. 06 (U6-Lctx) subfamily. Post-translationally, contains 4 disulfide bonds. As to expression, expressed by the venom gland.

It localises to the secreted. In Lycosa singoriensis (Wolf spider), this protein is U6-lycotoxin-Ls1a.